Consider the following 499-residue polypeptide: Potassium voltage-gated channel subfamily A member 2 (499 aa).

Positions 1-26 (MTVATEDPADEAAALPGHPQDTYDPE) are disordered. The tract at residues 1-125 (MTVATEDPAD…YELGEEAMEM (125 aa)) is tetramerization domain. Residues 1–160 (MTVATEDPAD…LLFEYPESSG (160 aa)) lie on the Cytoplasmic side of the membrane. The helical transmembrane segment at 161-182 (PARIIAIVSVMVILISIVSFCL) threads the bilayer. Over 183 to 221 (ETLPIFRDENEDMHGSGMTFHTYSNSTAGYQQSTSFTDP) the chain is Extracellular. The N-linked (GlcNAc...) asparagine glycan is linked to asparagine 207. A helical membrane pass occupies residues 222-243 (FFIVETLCIIWFSFEFLVRFFA). Cysteine 244 carries S-palmitoyl cysteine lipidation. The Cytoplasmic portion of the chain corresponds to 244–254 (CPSKAGFFTNI). The chain crosses the membrane as a helical span at residues 255–275 (MNIIDIVAIIPYFITLGTELA). The Extracellular portion of the chain corresponds to 276–289 (EKPEDAQQGQQAMS). Residues 290-310 (LAILRVIRLVRVFRIFKLSRH) traverse the membrane as a helical; Voltage-sensor segment. The Cytoplasmic portion of the chain corresponds to 311–325 (SKGLQILGQTLKASM). The interval 312–325 (KGLQILGQTLKASM) is S4-S5 linker. A helical transmembrane segment spans residues 326–347 (RELGLLIFFLFIGVILFSSAVY). Residues 348 to 361 (FAEADERDSQFPSI) are Extracellular-facing. The segment at residues 362–373 (PDAFWWAVVSMT) is an intramembrane region (helical). Residues 374 to 379 (TVGYGD) carry the Selectivity filter motif. An intramembrane segment occupies 374 to 381 (TVGYGDMV). The Extracellular segment spans residues 382–388 (PTTIGGK). The helical transmembrane segment at 389 to 417 (IVGSLCAIAGVLTIALPVPVIVSNFNYFY) threads the bilayer. Residues 418–499 (HRETEGEEQA…VNITKMLTDV (82 aa)) are Cytoplasmic-facing. At tyrosine 429 the chain carries Phosphotyrosine. Phosphoserine is present on residues serine 434, serine 440, serine 441, and serine 449. A Phosphotyrosine modification is found at tyrosine 458. Position 468 is a phosphoserine (serine 468). Residues 497 to 499 (TDV) carry the PDZ-binding motif.

Belongs to the potassium channel family. A (Shaker) (TC 1.A.1.2) subfamily. Kv1.2/KCNA2 sub-subfamily. As to quaternary structure, homotetramer and heterotetramer with other channel-forming alpha subunits, such as KCNA1, KCNA4, KCNA5, KCNA6 and KCNA7. Channel activity is regulated by interaction with the beta subunits, including KCNAB1 and KCNAB2. Identified in a complex with KCNA1 and KCNAB2. Identified in a complex with KCNA4 and FYN. Identified in a complex with KCNA5 and KCNAB1. Interacts with the beta subunit KCNAB1. Interacts with PTK2B. Interacts (via C-terminus) with CTTN. Interacts (via N-terminal cytoplasmic domain) with RHOA (GTP-bound form); this regulates channel activity by reducing location at the cell surface in response to CHRM1 activation. Interacts with DRD2. Interacts with SIGMAR1; cocaine consumption leads to increased interaction. Interacts with ADAM22. Interacts with CNTNAP2. Interacts (via C-terminus) with the PDZ domains of DLG1, DLG2 and DLG4. Interacts with ADAM11. Interacts with LYNX1. Phosphorylated on tyrosine residues; phosphorylation increases in response to ischemia. Phosphorylated on tyrosine residues by activated PTK2B/PYK2. Phosphorylation on tyrosine residues suppresses ion channel activity. Phosphorylated on tyrosine residues in response to CHRM1 activation; this abolishes interaction with CTTN. This is probably due to endocytosis of the phosphorylated channel subunits. Phosphorylated on serine residues in response to increased cAMP levels; phosphorylation is apparently not catalyzed by PKA. In terms of processing, N-glycosylated, with complex, sialylated N-glycans. As to expression, detected in portal vein myocytes (at protein level). Detected in portal vein. Brain, liver and kidney.

Its subcellular location is the cell membrane. It localises to the membrane. The protein localises to the cell projection. It is found in the axon. The protein resides in the synapse. Its subcellular location is the presynaptic cell membrane. It localises to the synaptosome. The protein localises to the endoplasmic reticulum membrane. It is found in the dendrite. The protein resides in the lamellipodium membrane. Its subcellular location is the cell junction. It localises to the paranodal septate junction. The catalysed reaction is K(+)(in) = K(+)(out). Inhibited by 4-aminopyridine (4-AP). Inhibited by dendrotoxin (DTX) and charybdotoxin (CTX), but not by tetraethylammonium (TEA). Inhibited by tityustoxin-K alpha (TsTX-Kalpha), a toxin that is highly specific for KCNA2. Inhibited by maurotoxin. Inhibited by kappaM conotoxins kappaM-RIIIJ and kappaM-RIIIK. Functionally, voltage-gated potassium channel that mediates transmembrane potassium transport in excitable membranes, primarily in the brain and the central nervous system, but also in the cardiovascular system. Prevents aberrant action potential firing and regulates neuronal output. Forms tetrameric potassium-selective channels through which potassium ions pass in accordance with their electrochemical gradient. The channel alternates between opened and closed conformations in response to the voltage difference across the membrane. Can form functional homotetrameric channels and heterotetrameric channels that contain variable proportions of KCNA1, KCNA2, KCNA4, KCNA5, KCNA6, KCNA7, and possibly other family members as well; channel properties depend on the type of alpha subunits that are part of the channel. Channel properties are modulated by cytoplasmic beta subunits that regulate the subcellular location of the alpha subunits and promote rapid inactivation of delayed rectifier potassium channels. In vivo, membranes probably contain a mixture of heteromeric potassium channel complexes, making it difficult to assign currents observed in intact tissues to any particular potassium channel family member. Homotetrameric KCNA2 forms a delayed-rectifier potassium channel that opens in response to membrane depolarization, followed by slow spontaneous channel closure. In contrast, a heteromultimer formed by KCNA2 and KCNA4 shows rapid inactivation. Regulates neuronal excitability and plays a role as pacemaker in the regulation of neuronal action potentials. KCNA2-containing channels play a presynaptic role and prevent hyperexcitability and aberrant action potential firing. Response to toxins that are selective for KCNA2-containing potassium channels suggests that in Purkinje cells, dendritic subthreshold KCNA2-containing potassium channels prevent random spontaneous calcium spikes, suppressing dendritic hyperexcitability without hindering the generation of somatic action potentials, and thereby play an important role in motor coordination. Plays a role in the induction of long-term potentiation of neuron excitability in the CA3 layer of the hippocampus. May function as down-stream effector for G protein-coupled receptors and inhibit GABAergic inputs to basolateral amygdala neurons. May contribute to the regulation of neurotransmitter release, such as gamma-aminobutyric acid (GABA). Contributes to the regulation of the axonal release of the neurotransmitter dopamine. Reduced KCNA2 expression plays a role in the perception of neuropathic pain after peripheral nerve injury, but not acute pain. Plays a role in the regulation of the time spent in non-rapid eye movement (NREM) sleep. The chain is Potassium voltage-gated channel subfamily A member 2 (KCNA2) from Oryctolagus cuniculus (Rabbit).